The primary structure comprises 248 residues: Probable transcriptional regulatory protein M446_6579 (248 aa).

Belongs to the TACO1 family.

Its subcellular location is the cytoplasm. This chain is Probable transcriptional regulatory protein M446_6579, found in Methylobacterium sp. (strain 4-46).